The following is an 82-amino-acid chain: Small ribosomal subunit protein bS16 (82 aa).

The protein belongs to the bacterial ribosomal protein bS16 family.

The sequence is that of Small ribosomal subunit protein bS16 from Deinococcus geothermalis (strain DSM 11300 / CIP 105573 / AG-3a).